A 335-amino-acid polypeptide reads, in one-letter code: GTPase Obg (335 aa).

Residues 1-158 enclose the Obg domain; the sequence is MFVDQITLEL…RLVELELKLI (158 aa). One can recognise an OBG-type G domain in the interval 159–334; the sequence is ADIGLVGFPN…LYDLFKSKLS (176 aa). Residues 165–172, 190–194, 215–218, 285–288, and 315–317 each bind GTP; these read GFPNAGKS, FTTLH, DIPG, NKID, and SGL. Mg(2+) is bound by residues S172 and T192.

This sequence belongs to the TRAFAC class OBG-HflX-like GTPase superfamily. OBG GTPase family. Monomer. Requires Mg(2+) as cofactor.

The protein localises to the cytoplasm. Functionally, an essential GTPase which binds GTP, GDP and possibly (p)ppGpp with moderate affinity, with high nucleotide exchange rates and a fairly low GTP hydrolysis rate. Plays a role in control of the cell cycle, stress response, ribosome biogenesis and in those bacteria that undergo differentiation, in morphogenesis control. This Chlamydia trachomatis serovar A (strain ATCC VR-571B / DSM 19440 / HAR-13) protein is GTPase Obg.